We begin with the raw amino-acid sequence, 171 residues long: S-ribosylhomocysteine lyase (171 aa).

Histidine 54, histidine 58, and cysteine 128 together coordinate Fe cation.

Belongs to the LuxS family. In terms of assembly, homodimer. It depends on Fe cation as a cofactor.

It carries out the reaction S-(5-deoxy-D-ribos-5-yl)-L-homocysteine = (S)-4,5-dihydroxypentane-2,3-dione + L-homocysteine. Functionally, involved in the synthesis of autoinducer 2 (AI-2) which is secreted by bacteria and is used to communicate both the cell density and the metabolic potential of the environment. The regulation of gene expression in response to changes in cell density is called quorum sensing. Catalyzes the transformation of S-ribosylhomocysteine (RHC) to homocysteine (HC) and 4,5-dihydroxy-2,3-pentadione (DPD). In Proteus mirabilis (strain HI4320), this protein is S-ribosylhomocysteine lyase.